The following is a 246-amino-acid chain: MARIALVTGGIGGIGTSICTRLAKDGCTVVANCHPSEAAAAEEWKQARAAEGFDIAVFTADVSSFDDSARMVREITEQVGPIDILVNCAGITRDKTFKKMEQAHWEAVINVNLNSVFNVTRQVWDGMLERGFGRIINISSVNGQRGQFGQANYSAAKAGMHGFTMALAQEGASKGVTVNTISPGYVETAMTLAMNDDVRNSIISGIPMRRMAQPDEIAAAIAFLAGDESGYMTGANLPVNGGLFMH.

Residues 12-14 and 88-92 each bind NADP(+); these read GGI and CAGIT. Residues Asp94 and 147 to 150 each bind substrate; that span reads QFGQ. Catalysis depends on Tyr153, which acts as the Proton acceptor. 183 to 186 contributes to the NADP(+) binding site; the sequence is PGYV. Residue 184-185 coordinates substrate; sequence GY.

Belongs to the short-chain dehydrogenases/reductases (SDR) family.

The protein resides in the cytoplasm. It carries out the reaction a (3R)-3-hydroxyacyl-CoA + NADP(+) = a 3-oxoacyl-CoA + NADPH + H(+). It functions in the pathway biopolymer metabolism; poly-(R)-3-hydroxybutanoate biosynthesis. This is Acetoacetyl-CoA reductase from Allochromatium vinosum (strain ATCC 17899 / DSM 180 / NBRC 103801 / NCIMB 10441 / D) (Chromatium vinosum).